Reading from the N-terminus, the 77-residue chain is Protein UL148C (77 aa).

2 helical membrane-spanning segments follow: residues 10-30 (VLYL…AVAV) and 35-55 (IAWA…VGAA).

Its subcellular location is the host membrane. In Homo sapiens (Human), this protein is Protein UL148C (UL148C).